Consider the following 375-residue polypeptide: Secreted LysM effector Vd4LysM (375 aa).

A signal peptide spans methionine 1–alanine 24. A LysM 1 domain is found at serine 57–valine 104. The disordered stretch occupies residues glycine 108 to isoleucine 139. The span at threonine 116–proline 129 shows a compositional bias: low complexity. The LysM 2 domain occupies lysine 149 to valine 195. Residues threonine 206–proline 217 show a composition bias toward low complexity. Residues threonine 206 to glutamine 225 form a disordered region. Positions lysine 237–valine 283 constitute a LysM 3 domain. Residues glycine 287 to glutamine 317 are disordered. Residues threonine 296–glutamine 317 are compositionally biased toward low complexity. Residues lysine 326–valine 372 form the LysM 4 domain.

It belongs to the secreted LysM effector family.

In terms of biological role, might have a role in sequestration of chitin oligosaccharides (breakdown products of fungal cell walls that are released during invasion and act as triggers of host immunity) to dampen host defense. Does not play an important role during host colonization. In Verticillium dahliae (strain VdLs.17 / ATCC MYA-4575 / FGSC 10137) (Verticillium wilt), this protein is Secreted LysM effector Vd4LysM.